Reading from the N-terminus, the 1035-residue chain is Potassium-transporting ATPase alpha chain 1 (1035 aa).

The segment at 1–41 is disordered; the sequence is MGKAENYELYSVELGPGPGGDMAAKMSKKKKAGGGGGKRKE. Topologically, residues 1-98 are cytoplasmic; it reads MGKAENYELY…NALRPPRGTP (98 aa). Phosphotyrosine is present on residues tyrosine 7 and tyrosine 10. The segment covering 26–40 has biased composition (basic residues); sequence MSKKKKAGGGGGKRK. Serine 27 bears the Phosphoserine mark. Residues 99-119 traverse the membrane as a helical segment; it reads EYVKFARQLAGGLQCLMWVAA. Residues 120–142 lie on the Lumenal side of the membrane; that stretch reads AICLIAFAIQASEGDLTTDDNLY. A helical membrane pass occupies residues 143–163; it reads LAIALIAVVVVTGCFGYYQEF. The Cytoplasmic segment spans residues 164 to 299; that stretch reads KSTNIIASFK…NEKTPIAIEI (136 aa). The chain crosses the membrane as a helical span at residues 300–319; it reads EHFVDIIAGLAILFGATFFI. The Lumenal portion of the chain corresponds to 320–331; that stretch reads VAMCIGYTFLRA. A helical transmembrane segment spans residues 332 to 349; it reads MVFFMAIVVAYVPEGLLA. Positions 340, 341, 343, and 345 each coordinate K(+). Residues 350–783 are Cytoplasmic-facing; it reads TVTVCLSLTA…EQGRLIFDNL (434 aa). The active-site 4-aspartylphosphate intermediate is the aspartate 387. Mg(2+) is bound by residues aspartate 387 and threonine 389. Phosphoserine is present on residues serine 463 and serine 601. Aspartate 728 and aspartate 732 together coordinate Mg(2+). Residues 784-803 form a helical membrane-spanning segment; sequence KKSIAYTLTKNIPELTPYLI. Glutamate 797 contacts K(+). Residues 804-813 lie on the Lumenal side of the membrane; the sequence is YITVSVPLPL. Residues 814-834 form a helical membrane-spanning segment; the sequence is GCITILFIELCTDIFPSVSLA. Position 822 (glutamate 822) interacts with K(+). The Cytoplasmic portion of the chain corresponds to 835 to 854; sequence YEKAESDIMHLRPRNPKRDR. Serine 840 is modified (phosphoserine). Residues 855–877 form a helical membrane-spanning segment; sequence LVNEPLAAYSYFQIGAIQSFAGF. The Lumenal segment spans residues 878 to 929; it reads TDYFTAMAQEGWFPLLCVGLRAQWEDHHLQDLQDSYGQEWTFGQRLYQQYTC. A helical transmembrane segment spans residues 930 to 949; sequence YTVFFISIEVCQIADVLIRK. At 950–963 the chain is on the cytoplasmic side; that stretch reads TRRLSAFQQGFFRN. At serine 954 the chain carries Phosphoserine; by PKA. A helical membrane pass occupies residues 964-982; that stretch reads KILVIAIVFQVCIGCFLCY. The Lumenal portion of the chain corresponds to 983–997; sequence CPGMPNIFNFMPIRF. The chain crosses the membrane as a helical span at residues 998 to 1018; it reads QWWLVPLPYGILIFVYDEIRK. Topologically, residues 1019–1035 are cytoplasmic; sequence LGVRCCPGSWWDQELYY.

The protein belongs to the cation transport ATPase (P-type) (TC 3.A.3) family. Type IIC subfamily. In terms of assembly, the gastric H(+)/K(+) ATPase pump is composed of the catalytic alpha subunit ATP4A and the regulatory beta subunit ATP4B. Interacts (via the P-domain) with ATP4B (via N-terminus); this interaction stabilizes the lumenal-open E2 conformation state and prevents the reverse reaction of the transport cycle. As to expression, expressed in gastric parietal cells (at protein level).

It is found in the apical cell membrane. It carries out the reaction K(+)(out) + ATP + H2O + H(+)(in) = K(+)(in) + ADP + phosphate + 2 H(+)(out). In terms of biological role, the catalytic subunit of the gastric H(+)/K(+) ATPase pump which transports H(+) ions in exchange for K(+) ions across the apical membrane of parietal cells. Uses ATP as an energy source to pump H(+) ions to the gastric lumen while transporting K(+) ion from the lumen into the cell. Remarkably generates a million-fold proton gradient across the gastric parietal cell membrane, acidifying the gastric juice down to pH 1. Within a transport cycle, the transfer of a H(+) ion across the membrane is coupled to ATP hydrolysis and is associated with a transient phosphorylation that shifts the pump conformation from inward-facing (E1) to outward-facing state (E2). The release of the H(+) ion in the stomach lumen is followed by binding of K(+) ion converting the pump conformation back to the E1 state. The protein is Potassium-transporting ATPase alpha chain 1 of Homo sapiens (Human).